We begin with the raw amino-acid sequence, 97 residues long: Osteocalcin (97 aa).

A signal peptide spans 1 to 18 (MKTLAFLVLCSLAAICLT). The propeptide occupies 19 to 52 (SDASTGSQPASDNPADEGMFVERDQASAVVRQKR). Residues 53-93 (AAGQLSLTQLESLREVCELNLACEHMMDTEGIIAAYTAYYG) enclose the Gla domain. Ca(2+) is bound by residues Glu-63, Glu-67, Glu-70, and Glu-76. Residues Glu-63, Glu-67, and Glu-70 each carry the 4-carboxyglutamate modification. Cys-69 and Cys-75 are disulfide-bonded.

It belongs to the osteocalcin/matrix Gla protein family. In terms of processing, gamma-carboxyglutamate residues are formed by vitamin K dependent carboxylation by GGCX. These residues are essential for the binding of calcium.

It is found in the secreted. The carboxylated form is one of the main organic components of the bone matrix, which constitutes 1-2% of the total bone protein. The carboxylated form binds strongly to apatite and calcium. In Sparus aurata (Gilthead sea bream), this protein is Osteocalcin (bglap).